The chain runs to 572 residues: Methionine--tRNA ligase (572 aa).

Residues 11–21 (PYVNHVPHLGT) carry the 'HIGH' region motif. Residues cysteine 143, cysteine 146, cysteine 156, and cysteine 159 each coordinate Zn(2+). A 'KMSKS' region motif is present at residues 334–338 (QFSKS). Lysine 337 serves as a coordination point for ATP.

The protein belongs to the class-I aminoacyl-tRNA synthetase family. MetG type 1 subfamily. The cofactor is Zn(2+).

The protein resides in the cytoplasm. It carries out the reaction tRNA(Met) + L-methionine + ATP = L-methionyl-tRNA(Met) + AMP + diphosphate. In terms of biological role, is required not only for elongation of protein synthesis but also for the initiation of all mRNA translation through initiator tRNA(fMet) aminoacylation. This chain is Methionine--tRNA ligase (metG), found in Aeropyrum pernix (strain ATCC 700893 / DSM 11879 / JCM 9820 / NBRC 100138 / K1).